Consider the following 526-residue polypeptide: Tyrosine-protein kinase transforming protein Src (526 aa).

Residues 1-52 (MGSSKSKPKDPSQRRHSLEPPDSTHHGGFPASQTPDETAAPDAHRNPSRSFG) form a disordered region. The N-myristoyl glycine; by host moiety is linked to residue G2. Over residues 7–25 (KPKDPSQRRHSLEPPDSTH) the composition is skewed to basic and acidic residues. SH3 domains follow at residues 71-139 (TSPQ…YVAP) and 81-142 (GGVT…PSDS). An SH2 domain is found at 148 to 245 (WYFGKITRRE…GLCHRLANVC (98 aa)). The 251-residue stretch at 267-517 (LRLEAKLGQG…TFKYLQAQLL (251 aa)) folds into the Protein kinase domain. Residues 273 to 281 (LGQGCFGEV) and K295 each bind ATP. D386 (proton acceptor) is an active-site residue. Y416 bears the Phosphotyrosine; by autocatalysis mark.

This sequence belongs to the protein kinase superfamily. Tyr protein kinase family. SRC subfamily. Homodimer. The phosphorylated form is termed pp60v-src.

The enzyme catalyses L-tyrosyl-[protein] + ATP = O-phospho-L-tyrosyl-[protein] + ADP + H(+). Functionally, this phosphoprotein, required for both the initiation and the maintenance of neoplastic transformation, is a protein kinase that catalyzes the phosphorylation of tyrosine residues in vitro. This Gallus gallus (Chicken) protein is Tyrosine-protein kinase transforming protein Src (V-SRC).